A 384-amino-acid polypeptide reads, in one-letter code: 1-deoxy-D-xylulose 5-phosphate reductoisomerase (384 aa).

NADPH contacts are provided by threonine 10, glycine 11, serine 12, isoleucine 13, glycine 36, asparagine 38, and asparagine 122. Lysine 123 is a 1-deoxy-D-xylulose 5-phosphate binding site. Position 124 (glutamate 124) interacts with NADPH. Aspartate 148 provides a ligand contact to Mn(2+). Residues serine 149, glutamate 150, serine 174, and histidine 197 each coordinate 1-deoxy-D-xylulose 5-phosphate. Position 150 (glutamate 150) interacts with Mn(2+). Glycine 203 contributes to the NADPH binding site. Positions 210, 215, 216, and 219 each coordinate 1-deoxy-D-xylulose 5-phosphate. Residue glutamate 219 coordinates Mn(2+).

Belongs to the DXR family. Mg(2+) serves as cofactor. Mn(2+) is required as a cofactor.

The enzyme catalyses 2-C-methyl-D-erythritol 4-phosphate + NADP(+) = 1-deoxy-D-xylulose 5-phosphate + NADPH + H(+). Its pathway is isoprenoid biosynthesis; isopentenyl diphosphate biosynthesis via DXP pathway; isopentenyl diphosphate from 1-deoxy-D-xylulose 5-phosphate: step 1/6. Its function is as follows. Catalyzes the NADPH-dependent rearrangement and reduction of 1-deoxy-D-xylulose-5-phosphate (DXP) to 2-C-methyl-D-erythritol 4-phosphate (MEP). The protein is 1-deoxy-D-xylulose 5-phosphate reductoisomerase of Geobacter metallireducens (strain ATCC 53774 / DSM 7210 / GS-15).